Here is a 609-residue protein sequence, read N- to C-terminus: Pentatricopeptide repeat-containing protein At1g03540 (609 aa).

14 PPR repeats span residues 25-59, 60-94, 95-126, 127-161, 162-196, 197-227, 228-263, 264-298, 299-329, 330-364, 396-426, 427-461, 462-497, and 498-532; these read SAPTKQSRILELCKLGQLTEAIRILNSTHSSEIPA, TPKLYASLLQTCNKVFSFIHGIQFHAHVVKSGLET, DRNVGNSLLSLYFKLGPGMRETRRVFDGRFVK, DAISWTSMMSGYVTGKEHVKALEVFVEMVSFGLDA, NEFTLSSAVKACSELGEVRLGRCFHGVVITHGFEW, NHFISSTLAYLYGVNREPVDARRVFDEMPEP, DVICWTAVLSAFSKNDLYEEALGLFYAMHRGKGLVP, DGSTFGTVLTACGNLRRLKQGKEIHGKLITNGIGS, NVVVESSLLDMYGKCGSVREARQVFNGMSKK, NSVSWSALLGGYCQNGEHEKAIEIFREMEEKDLYC, NVIVESALIDLYGKSGCIDSASRVYSKMSIR, NMITWNAMLSALAQNGRGEEAVSFFNDMVKKGIKP, DYISFIAILTACGHTGMVDEGRNYFVLMAKSYGIKP, and GTEHYSCMIDLLGRAGLFEEAENLLERAECRNDAS. Positions 533–609 are type E motif; that stretch reads LWGVLLGPCA…TVGQSWIDAH (77 aa).

Belongs to the PPR family. PCMP-E subfamily.

In Arabidopsis thaliana (Mouse-ear cress), this protein is Pentatricopeptide repeat-containing protein At1g03540 (PCMP-E4).